The following is a 453-amino-acid chain: GTPase Der (453 aa).

2 EngA-type G domains span residues 3 to 167 (FTLA…PAQT) and 187 to 360 (IKVA…AVWN). Residues 9-16 (GRPNVGKS), 56-60 (DTAGL), 119-122 (NKSE), 193-200 (GRPNAGKS), 240-244 (DTAGL), and 305-308 (NKSD) each bind GTP. The 85-residue stretch at 361 to 445 (TRIPTNPLNR…PIRLTLREKG (85 aa)) folds into the KH-like domain.

The protein belongs to the TRAFAC class TrmE-Era-EngA-EngB-Septin-like GTPase superfamily. EngA (Der) GTPase family. As to quaternary structure, associates with the 50S ribosomal subunit.

Its function is as follows. GTPase that plays an essential role in the late steps of ribosome biogenesis. This is GTPase Der from Azorhizobium caulinodans (strain ATCC 43989 / DSM 5975 / JCM 20966 / LMG 6465 / NBRC 14845 / NCIMB 13405 / ORS 571).